The primary structure comprises 1012 residues: Vacuolar membrane protease (1012 aa).

Residues M1–T60 are Cytoplasmic-facing. Residues V61–V81 traverse the membrane as a helical segment. Over P82 to L432 the chain is Vacuolar. N-linked (GlcNAc...) asparagine glycosylation is present at N159. Zn(2+) is bound by residues H215 and D227. The active-site Proton acceptor is the E261. Zn(2+) contacts are provided by E262, E287, and H360. Residues F433 to I453 traverse the membrane as a helical segment. The Cytoplasmic portion of the chain corresponds to L454 to Y487. The helical transmembrane segment at P488–V508 threads the bilayer. Topologically, residues N509 to Y518 are vacuolar. Residues A519 to A539 traverse the membrane as a helical segment. Topologically, residues D540–A550 are cytoplasmic. A helical transmembrane segment spans residues Y551–V571. The Vacuolar segment spans residues N572–D575. A helical transmembrane segment spans residues I576–S596. Topologically, residues Y597–W710 are cytoplasmic. Positions S614–L629 are enriched in polar residues. Residues S614–L660 form a disordered region. Residues V711–F731 traverse the membrane as a helical segment. The Vacuolar segment spans residues L732–G743. Residues V744–L764 form a helical membrane-spanning segment. Residues S765–T777 lie on the Cytoplasmic side of the membrane. Residues F778–A798 form a helical membrane-spanning segment. Residues E799 to F1012 are Vacuolar-facing. N-linked (GlcNAc...) asparagine glycans are attached at residues N842 and N878.

It belongs to the peptidase M28 family. Requires Zn(2+) as cofactor.

The protein localises to the vacuole membrane. Functionally, may be involved in vacuolar sorting and osmoregulation. The chain is Vacuolar membrane protease from Coccidioides posadasii (strain RMSCC 757 / Silveira) (Valley fever fungus).